Consider the following 201-residue polypeptide: Recombination protein RecR (201 aa).

Residues cysteine 56–cysteine 71 form a C4-type zinc finger. The 96-residue stretch at serine 79 to proline 174 folds into the Toprim domain.

Belongs to the RecR family.

Its function is as follows. May play a role in DNA repair. It seems to be involved in an RecBC-independent recombinational process of DNA repair. It may act with RecF and RecO. This is Recombination protein RecR from Cutibacterium acnes (strain DSM 16379 / KPA171202) (Propionibacterium acnes).